A 1397-amino-acid chain; its full sequence is DNA-directed RNA polymerase subunit beta' (1397 aa).

Zn(2+) contacts are provided by Cys-75, Cys-77, Cys-90, and Cys-93. Residues Asp-465, Asp-467, and Asp-469 each contribute to the Mg(2+) site. 4 residues coordinate Zn(2+): Cys-819, Cys-893, Cys-900, and Cys-903.

The protein belongs to the RNA polymerase beta' chain family. The RNAP catalytic core consists of 2 alpha, 1 beta, 1 beta' and 1 omega subunit. When a sigma factor is associated with the core the holoenzyme is formed, which can initiate transcription. Mg(2+) serves as cofactor. Requires Zn(2+) as cofactor.

It catalyses the reaction RNA(n) + a ribonucleoside 5'-triphosphate = RNA(n+1) + diphosphate. DNA-dependent RNA polymerase catalyzes the transcription of DNA into RNA using the four ribonucleoside triphosphates as substrates. The polypeptide is DNA-directed RNA polymerase subunit beta' (Acinetobacter baumannii (strain SDF)).